The following is a 747-amino-acid chain: Cysteine--tRNA ligase, cytoplasmic (747 aa).

A disordered region spans residues 1–26 (MTESWEQGKGRRTQPPWSAPNTNEQP). Over residues 15–25 (PPWSAPNTNEQ) the composition is skewed to polar residues. C54 provides a ligand contact to Zn(2+). G55 serves as a coordination point for L-cysteine. The 'HIGH' region signature appears at 56-66 (PTVYDASHMGH). Residue T95 coordinates L-cysteine. The 'KIIK' region signature appears at 100 to 103 (KIIK). Residues C347, H372, and E376 each coordinate Zn(2+). L-cysteine is bound at residue H372. A 'KMSKS' region motif is present at residues 405–409 (KMSKS). Position 408 (K408) interacts with ATP. Basic and acidic residues predominate over residues 651 to 683 (EEKRKAEEEKQRKKEEAARKKQQQEAAKLEKMK). Disordered stretches follow at residues 651 to 685 (EEKR…MKIS) and 700 to 721 (FDES…GQTK).

Belongs to the class-I aminoacyl-tRNA synthetase family. Homodimer. Requires Zn(2+) as cofactor.

The protein resides in the cytoplasm. The enzyme catalyses tRNA(Cys) + L-cysteine + ATP = L-cysteinyl-tRNA(Cys) + AMP + diphosphate. In terms of biological role, catalyzes the ATP-dependent ligation of cysteine to tRNA(Cys). The polypeptide is Cysteine--tRNA ligase, cytoplasmic (cars1) (Xenopus laevis (African clawed frog)).